The chain runs to 422 residues: Isocitrate dehydrogenase [NADP] (422 aa).

Residue threonine 94 participates in NADP(+) binding. Residues serine 103, asparagine 105, arginine 109, arginine 119, and arginine 143 each contribute to the D-threo-isocitrate site. Position 310 (aspartate 310) interacts with Mg(2+). NADP(+) is bound by residues 344 to 350, asparagine 357, tyrosine 396, and arginine 400; that span reads HGTAPKY.

The protein belongs to the isocitrate and isopropylmalate dehydrogenases family. In terms of assembly, homodimer. Mg(2+) is required as a cofactor. Requires Mn(2+) as cofactor.

It catalyses the reaction D-threo-isocitrate + NADP(+) = 2-oxoglutarate + CO2 + NADPH. Catalyzes the oxidative decarboxylation of isocitrate to 2-oxoglutarate and carbon dioxide with the concomitant reduction of NADP(+). This chain is Isocitrate dehydrogenase [NADP] (icd), found in Staphylococcus aureus (strain COL).